The sequence spans 444 residues: Multidrug resistance protein MdtA (444 aa).

The first 20 residues, 1–20 (MKSQSKRTSRLFVFVGVVVA), serve as a signal peptide directing secretion. The span at 37 to 52 (NNTSGAQQSARGQDTS) shows a compositional bias: polar residues. Disordered regions lie at residues 37 to 60 (NNTSGAQQSARGQDTSHGGRRNTP) and 398 to 444 (TPRS…AEKS). The span at 406–419 (ANPASAEKAAAEAE) shows a compositional bias: low complexity. The span at 435–444 (ARSTTAAEKS) shows a compositional bias: polar residues.

The protein belongs to the membrane fusion protein (MFP) (TC 8.A.1) family. Part of a tripartite efflux system composed of MdtA, MdtB and MdtC.

Its subcellular location is the cell inner membrane. The polypeptide is Multidrug resistance protein MdtA (Yersinia pestis bv. Antiqua (strain Antiqua)).